The following is a 379-amino-acid chain: Chaperone protein DnaJ (379 aa).

The region spanning 5 to 70 (DYYEVLGLSK…EKKAMYDQYG (66 aa)) is the J domain. Residues 136–214 (GCKKDIRIHT…CHGDGRVHKA (79 aa)) form a CR-type zinc finger. Zn(2+) is bound by residues cysteine 149, cysteine 152, cysteine 166, cysteine 169, cysteine 188, cysteine 191, cysteine 202, and cysteine 205. CXXCXGXG motif repeat units follow at residues 149–156 (CDTCHGTG), 166–173 (CSHCHGSG), 188–195 (CPSCHGTG), and 202–209 (CRSCHGDG).

It belongs to the DnaJ family. Homodimer. Requires Zn(2+) as cofactor.

The protein localises to the cytoplasm. Functionally, participates actively in the response to hyperosmotic and heat shock by preventing the aggregation of stress-denatured proteins and by disaggregating proteins, also in an autonomous, DnaK-independent fashion. Unfolded proteins bind initially to DnaJ; upon interaction with the DnaJ-bound protein, DnaK hydrolyzes its bound ATP, resulting in the formation of a stable complex. GrpE releases ADP from DnaK; ATP binding to DnaK triggers the release of the substrate protein, thus completing the reaction cycle. Several rounds of ATP-dependent interactions between DnaJ, DnaK and GrpE are required for fully efficient folding. Also involved, together with DnaK and GrpE, in the DNA replication of plasmids through activation of initiation proteins. The polypeptide is Chaperone protein DnaJ (Mannheimia haemolytica (Pasteurella haemolytica)).